The primary structure comprises 82 residues: Delta-conotoxin SVIE (82 aa).

An N-terminal signal peptide occupies residues 1–22; that stretch reads MKLTCVMIVAVLFLTTWTFVTA. A propeptide spanning residues 23-51 is cleaved from the precursor; it reads DDSRYGLKNLFPKARHEMKNPEASKLNKR. Disulfide bonds link Cys-54/Cys-69, Cys-61/Cys-73, and Cys-68/Cys-77. Position 65 is a 4-hydroxyproline (Pro-65).

Belongs to the conotoxin O1 superfamily. Expressed by the venom duct.

The protein localises to the secreted. Delta-conotoxins bind to site 6 of voltage-gated sodium channels (Nav) and inhibit the inactivation process. Impairs rapid channel inactivation of Nav1.4/SCN4A (Kd=500 nM). Interacts with a conserved hydrophobic triad (YFV) in the domain-4 voltage sensor of sodium channels. In vivo, injection of both native or synthetic peptide induces twitching of back limbs, running in circles, and spastic paralysis. This is Delta-conotoxin SVIE (SO6) from Conus striatus (Striated cone).